Consider the following 555-residue polypeptide: MNRFITSILVVFISMSGWLQGADTGSISGILGMRDFQSRFADRYNPISNSYSYSAWRQALLTGTINAGCLFGAMLSSPFTERIGKKYSICFFSGVYIIAELLLVTAVPSWIQVLVGKILAGVGIGALSVLSPGYQSEVAPPQIRGAVVATYQIFSTGAALVAACINMGTHKLRKTASWRTSFGINMLWGILLMVGVLFLPESPRYLIYKGRDEEALRIMCNMAELSPESEIIQTNFNTIKSDIEIEMAGGKARWIEIFGKDIRYRTCLGFLVMLFRELIGNNYYFYYATQVFKGTGMTDIFLPAVILGAINFGTTFGALYTIDNLGRRNPLIFGAAFQSICFFIYAAVGDRKLIYKNGTSDHRAGSVMIVFSCLFLFSYCCSWGPMGWVIVGETFPIRYRSKCASVATSGNWLGNFMISFFTPFINNAIGFKLGYIYACINLFSSFMIFFLAKETKGLTLEEVNDLYMSNIKPWESYKYVREIESHRIHFSKEEEKREREKSKGIRGQEEEFIENADEDNNDSSSSSGSVVSAVKPRRSAVSNDRFSEDSHPTYI.

Residues 1 to 9 (MNRFITSIL) are Cytoplasmic-facing. A helical membrane pass occupies residues 10 to 30 (VVFISMSGWLQGADTGSISGI). At 31-58 (LGMRDFQSRFADRYNPISNSYSYSAWRQ) the chain is on the extracellular side. The helical transmembrane segment at 59–79 (ALLTGTINAGCLFGAMLSSPF) threads the bilayer. Residues 80 to 87 (TERIGKKY) are Cytoplasmic-facing. Residues 88–108 (SICFFSGVYIIAELLLVTAVP) form a helical membrane-spanning segment. Residues 109-112 (SWIQ) lie on the Extracellular side of the membrane. The helical transmembrane segment at 113–133 (VLVGKILAGVGIGALSVLSPG) threads the bilayer. Residues 134–144 (YQSEVAPPQIR) are Cytoplasmic-facing. The chain crosses the membrane as a helical span at residues 145–165 (GAVVATYQIFSTGAALVAACI). Over 166 to 179 (NMGTHKLRKTASWR) the chain is Extracellular. The chain crosses the membrane as a helical span at residues 180–200 (TSFGINMLWGILLMVGVLFLP). Residues 201 to 266 (ESPRYLIYKG…IFGKDIRYRT (66 aa)) are Cytoplasmic-facing. The helical transmembrane segment at 267–285 (CLGFLVMLFRELIGNNYYF) threads the bilayer. Residues 286-301 (YYATQVFKGTGMTDIF) lie on the Extracellular side of the membrane. Residues 302–322 (LPAVILGAINFGTTFGALYTI) traverse the membrane as a helical segment. The Cytoplasmic portion of the chain corresponds to 323-328 (DNLGRR). Residues 329–349 (NPLIFGAAFQSICFFIYAAVG) traverse the membrane as a helical segment. Residues 350 to 363 (DRKLIYKNGTSDHR) lie on the Extracellular side of the membrane. An N-linked (GlcNAc...) asparagine glycan is attached at Asn-357. Residues 364 to 384 (AGSVMIVFSCLFLFSYCCSWG) form a helical membrane-spanning segment. At 385 to 404 (PMGWVIVGETFPIRYRSKCA) the chain is on the cytoplasmic side. A helical transmembrane segment spans residues 405–425 (SVATSGNWLGNFMISFFTPFI). At 426 to 432 (NNAIGFK) the chain is on the extracellular side. Residues 433–453 (LGYIYACINLFSSFMIFFLAK) form a helical membrane-spanning segment. Residues 454-555 (ETKGLTLEEV…FSEDSHPTYI (102 aa)) are Cytoplasmic-facing. The segment covering 492-509 (KEEEKREREKSKGIRGQE) has biased composition (basic and acidic residues). The interval 492–555 (KEEEKREREK…FSEDSHPTYI (64 aa)) is disordered. The span at 510-521 (EEFIENADEDNN) shows a compositional bias: acidic residues. Residues 522–534 (DSSSSSGSVVSAV) are compositionally biased toward low complexity. Over residues 545–555 (RFSEDSHPTYI) the composition is skewed to basic and acidic residues.

It belongs to the major facilitator superfamily. Sugar transporter (TC 2.A.1.1) family.

The protein localises to the membrane. Its function is as follows. High-affinity gluconate transporter. The sequence is that of High-affinity gluconate transporter ght3 (ght3) from Schizosaccharomyces pombe (strain 972 / ATCC 24843) (Fission yeast).